The following is a 143-amino-acid chain: Large ribosomal subunit protein uL11 (143 aa).

The protein belongs to the universal ribosomal protein uL11 family. In terms of assembly, part of the ribosomal stalk of the 50S ribosomal subunit. Interacts with L10 and the large rRNA to form the base of the stalk. L10 forms an elongated spine to which L12 dimers bind in a sequential fashion forming a multimeric L10(L12)X complex. One or more lysine residues are methylated.

Forms part of the ribosomal stalk which helps the ribosome interact with GTP-bound translation factors. The chain is Large ribosomal subunit protein uL11 from Teredinibacter turnerae (strain ATCC 39867 / T7901).